Consider the following 335-residue polypeptide: Tetraacyldisaccharide 4'-kinase (335 aa).

62 to 69 (NVGGTGKT) provides a ligand contact to ATP.

This sequence belongs to the LpxK family.

The enzyme catalyses a lipid A disaccharide + ATP = a lipid IVA + ADP + H(+). The protein operates within glycolipid biosynthesis; lipid IV(A) biosynthesis; lipid IV(A) from (3R)-3-hydroxytetradecanoyl-[acyl-carrier-protein] and UDP-N-acetyl-alpha-D-glucosamine: step 6/6. Functionally, transfers the gamma-phosphate of ATP to the 4'-position of a tetraacyldisaccharide 1-phosphate intermediate (termed DS-1-P) to form tetraacyldisaccharide 1,4'-bis-phosphate (lipid IVA). This Methylobacillus flagellatus (strain ATCC 51484 / DSM 6875 / VKM B-1610 / KT) protein is Tetraacyldisaccharide 4'-kinase.